The sequence spans 331 residues: UPF0324 membrane protein SA0329 (331 aa).

The next 11 helical transmembrane spans lie at 9-26 (FMIG…SFLA), 31-48 (ILDK…AILY), 69-88 (LLRF…DIIG), 93-115 (LLAI…NKLL), 122-144 (ALLL…APIF), 154-176 (SIGI…YAIF), 183-202 (YGAW…LAGG), 217-234 (LGRV…ILIM), 247-269 (ISIP…VTIP), 273-295 (LNIL…GLNV), and 308-330 (LMTI…HWLY).

This sequence belongs to the UPF0324 family.

The protein localises to the cell membrane. This chain is UPF0324 membrane protein SA0329, found in Staphylococcus aureus (strain N315).